The sequence spans 994 residues: Alpha-mannosidase F (994 aa).

The signal sequence occupies residues 1–20; the sequence is MKNFYYFILILLFFNEVCYS. Histidine 35, aspartate 37, and aspartate 151 together coordinate Zn(2+). The Nucleophile role is filled by aspartate 151. Asparagine 247 and asparagine 381 each carry an N-linked (GlcNAc...) asparagine glycan. A Zn(2+)-binding site is contributed by histidine 392. Asparagine 554, asparagine 712, and asparagine 932 each carry an N-linked (GlcNAc...) asparagine glycan.

This sequence belongs to the glycosyl hydrolase 38 family. Zn(2+) is required as a cofactor.

The protein localises to the secreted. The enzyme catalyses Hydrolysis of terminal, non-reducing alpha-D-mannose residues in alpha-D-mannosides.. The chain is Alpha-mannosidase F (manF) from Dictyostelium discoideum (Social amoeba).